The primary structure comprises 706 residues: Zinc transporter foi (706 aa).

The signal sequence occupies residues 1-21 (MARHIMAVCVVCLLCAHRLHC). At 22-261 (QDHIESLLGP…EKDKDIFYVW (240 aa)) the chain is on the extracellular side. The segment covering 40-56 (QDQLNARVYTNLSPSSE) has biased composition (polar residues). The interval 40-101 (QDQLNARVYT…HGPTSESRVP (62 aa)) is disordered. Asn74, Asn119, Asn176, Asn182, Asn196, and Asn207 each carry an N-linked (GlcNAc...) asparagine glycan. A helical transmembrane segment spans residues 262–282 (IYAFISVFACGILGLVGVAII). Topologically, residues 283–292 (PFMGSRYYKY) are cytoplasmic. A helical membrane pass occupies residues 293-313 (IIQYLVALAVGTMTGDALLHL). Topologically, residues 314–329 (LPHSLAGQDERGMIMK) are extracellular. Residues 330-350 (GLGCLGGIIFFYVMEHALTMI) traverse the membrane as a helical segment. The Cytoplasmic segment spans residues 351–604 (SEWRKSVEKK…LIKAGMSVKS (254 aa)). 3 positions are modified to phosphoserine: Ser376, Ser377, and Ser381. A helical membrane pass occupies residues 605–625 (AVYYNLLTGVLSFIGMIFGIA). The Extracellular segment spans residues 626 to 631 (FGQSQD). Residues 632–652 (VAQWMFAVAAGLFIYIALVDM) traverse the membrane as a helical segment. The Cytoplasmic segment spans residues 653–665 (MPEISASHKSLGQ). Residues 666–686 (FLLQILGMLSGVGIMLLIALY) form a helical membrane-spanning segment. Topologically, residues 687-706 (EGDLMSAFGTAGAASHQHAH) are extracellular.

Belongs to the ZIP transporter (TC 2.A.5) family. Post-translationally, glycosylated. Maternal foi has almost completely disappeared by embryonic stage 3 except in the pole cells. In stage 6 embryos, expression is enriched in the invaginating mesoderm. In stage 9 embryos, high levels in the anterior and posterior midgut primordia. In stage 14 embryos, broad expression with low levels in the epidermis.

It is found in the cell membrane. Required for the normal migration of longitudinal and peripheral glial cells. During larval development, required for the migration of the subretinal glia into the eye disk. During embryonic development, also controls the migration of muscle cells toward their attachment sites. Required in the mesoderm for the correct morphogenesis of embryonic gonad and for tracheal branch fusion during tracheal development. Shg may be cooperating with foi to mediate a common mechanism for gonad and tracheal morphogenesis. Acts as a zinc transporter in both yeast and mammalian cells. The protein is Zinc transporter foi of Drosophila melanogaster (Fruit fly).